The sequence spans 524 residues: Acetyl-CoA hydrolase (524 aa).

Residue 275–279 (GIGNI) coordinates CoA. Catalysis depends on Glu-300, which acts as the 5-glutamyl coenzyme A thioester intermediate. 2 residues coordinate CoA: Asn-390 and Gly-394.

Belongs to the acetyl-CoA hydrolase/transferase family.

Its subcellular location is the cytoplasm. The catalysed reaction is acetyl-CoA + H2O = acetate + CoA + H(+). Presumably involved in regulating the intracellular acetyl-CoA pool for fatty acid and cholesterol synthesis and fatty acid oxidation. This Candida albicans (strain SC5314 / ATCC MYA-2876) (Yeast) protein is Acetyl-CoA hydrolase (ACH1).